The sequence spans 741 residues: Protein ACCUMULATION AND REPLICATION OF CHLOROPLASTS 3, chloroplastic (741 aa).

The N-terminal 41 residues, 1–41 (MPISMELPVFSTLRVPLFSRLALLPTFGVPFSSLGATTRLN), are a transit peptide targeting the chloroplast. Disordered regions lie at residues 444–465 (ENGDDSEYPLKEGEPSRNSRLD) and 539–558 (DSREESFFNPNGSTKDSSDT). Basic and acidic residues predominate over residues 451 to 465 (YPLKEGEPSRNSRLD). Residues 546–558 (FNPNGSTKDSSDT) are compositionally biased toward polar residues. 3 MORN repeats span residues 612–628 (QGGLPEGKGRLVLGDGS), 630–652 (YDGMWHNGKRSGLGTFYFKNGDV), and 653–675 (FQGTWREDLIHGKGWFYFHKGDR).

Self-interacts. Interacts with FTSZ, CDP1/PARC6 (via N-terminus), MIND1 and MINE1. Part of a complex made of ARC3, ARC6, FTSZ1 and FTSZ2. Recruited to the middle of the plastid by CDP1/PARC6 where subsequent complex made of CDP1/PARC6, ARC3 and FtsZ proteins can form; this complex enhances the dynamics of Z rings during chloroplast division. Binding to FTSZ2-1 is enabled by ARC6.

The protein localises to the plastid. Its subcellular location is the chloroplast outer membrane. It is found in the chloroplast stroma. In terms of biological role, together with MIND1 and MCD1, regulates FtsZ ring positioning in chloroplasts in an ARC6-dependent manner. Z-ring accessory protein involved in the initiation of plastid division and division site placement (might functionally replace bacterial MinC). Acts as a disassembly factor that accelerates fragmentation and depolymerization of existing FtsZ2 filaments by enhancing FTSZ2 GTPase activity, thus leading to the conversion of FTSZ2 bound GTP into GDP, a process which triggers FtsZ2 filaments destabilization. Prevents misplaced Z-ring formation at chloroplast stroma nondivision sites. May control the rate of chloroplast expansion. Seems to influence stromule (stroma-filled tubular extensions of the plastid envelope membrane) length and frequency. The chain is Protein ACCUMULATION AND REPLICATION OF CHLOROPLASTS 3, chloroplastic from Arabidopsis thaliana (Mouse-ear cress).